Reading from the N-terminus, the 185-residue chain is ATP synthase subunit b, chloroplastic (185 aa).

The helical transmembrane segment at 27–49 (LATNPINLSVVLGVLIFFGKGVL) threads the bilayer.

Belongs to the ATPase B chain family. In terms of assembly, F-type ATPases have 2 components, F(1) - the catalytic core - and F(0) - the membrane proton channel. F(1) has five subunits: alpha(3), beta(3), gamma(1), delta(1), epsilon(1). F(0) has four main subunits: a(1), b(1), b'(1) and c(10-14). The alpha and beta chains form an alternating ring which encloses part of the gamma chain. F(1) is attached to F(0) by a central stalk formed by the gamma and epsilon chains, while a peripheral stalk is formed by the delta, b and b' chains.

It localises to the plastid. The protein localises to the chloroplast thylakoid membrane. In terms of biological role, f(1)F(0) ATP synthase produces ATP from ADP in the presence of a proton or sodium gradient. F-type ATPases consist of two structural domains, F(1) containing the extramembraneous catalytic core and F(0) containing the membrane proton channel, linked together by a central stalk and a peripheral stalk. During catalysis, ATP synthesis in the catalytic domain of F(1) is coupled via a rotary mechanism of the central stalk subunits to proton translocation. Its function is as follows. Component of the F(0) channel, it forms part of the peripheral stalk, linking F(1) to F(0). In Vitis vinifera (Grape), this protein is ATP synthase subunit b, chloroplastic.